A 211-amino-acid polypeptide reads, in one-letter code: Large ribosomal subunit protein eL13 (211 aa).

The protein belongs to the eukaryotic ribosomal protein eL13 family. Component of the 60S large ribosomal subunit (LSU).

It localises to the cytoplasm. Functionally, component of the ribosome, a large ribonucleoprotein complex responsible for the synthesis of proteins in the cell. The small ribosomal subunit (SSU) binds messenger RNAs (mRNAs) and translates the encoded message by selecting cognate aminoacyl-transfer RNA (tRNA) molecules. The large subunit (LSU) contains the ribosomal catalytic site termed the peptidyl transferase center (PTC), which catalyzes the formation of peptide bonds, thereby polymerizing the amino acids delivered by tRNAs into a polypeptide chain. The nascent polypeptides leave the ribosome through a tunnel in the LSU and interact with protein factors that function in enzymatic processing, targeting, and the membrane insertion of nascent chains at the exit of the ribosomal tunnel. As part of the LSU, it is probably required for its formation and the maturation of rRNAs. This chain is Large ribosomal subunit protein eL13 (rpl13), found in Danio rerio (Zebrafish).